Reading from the N-terminus, the 661-residue chain is PAN2-PAN3 deadenylation complex subunit pan3 (661 aa).

Disordered stretches follow at residues 1-29 (MASVGKPSLEDARRGTGSPKMKARENAKD) and 53-131 (DPHK…RQDA). A C3H1-type zinc finger spans residues 26–55 (NAKDTLCRNVTIYGRCRYEDKGCAFNHDPH). The PABPC-interacting motif-2 (PAM-2) signature appears at 63–83 (NASKKRFNVDSPSFTPSLLPS). Residues 77–104 (TPSLLPSNGSSPTSSSSSLKKSSTISPK) are compositionally biased toward low complexity. Residues 115–126 (TAASRSNTSTPG) are compositionally biased toward polar residues. The interval 263–524 (QTLPNTQLPA…NIDILINGIS (262 aa)) is pseudokinase domain. ATP-binding positions include R315, 364-371 (DYHPLSKT), and 424-425 (SK). The stretch at 525–563 (SQLMSTFDSALHLDDQLTSDLGRELENGRLVRLLTKLNF) forms a coiled coil. Residues 564–661 (INERPEHEHD…ALLRPSRRPH (98 aa)) are knob domain.

Belongs to the protein kinase superfamily. PAN3 family. Homodimer. Forms a heterotrimer with a catalytic subunit pan2 to form the poly(a)-nuclease (PAN) deadenylation complex. Interacts (via PAM-2 motif) with poly(A)-binding protein pab1 (via PABC domain), conferring substrate specificity of the enzyme complex.

The protein resides in the cytoplasm. Functionally, regulatory subunit of the poly(A)-nuclease (PAN) deadenylation complex, one of two cytoplasmic mRNA deadenylases involved in mRNA turnover. PAN specifically shortens poly(A) tails of RNA and the activity is stimulated by poly(A)-binding protein pab1. PAN deadenylation is followed by rapid degradation of the shortened mRNA tails by the CCR4-NOT complex. Deadenylated mRNAs are then degraded by two alternative mechanisms, namely exosome-mediated 3'-5' exonucleolytic degradation, or deadenylation-dependent mRNA decaping and subsequent 5'-3' exonucleolytic degradation by XRN1. May also be involved in post-transcriptional maturation of mRNA poly(A) tails. pan3 acts as a positive regulator for PAN activity, recruiting the catalytic subunit pan2 to mRNA via its interaction with RNA and with pab1. This is PAN2-PAN3 deadenylation complex subunit pan3 from Emericella nidulans (strain FGSC A4 / ATCC 38163 / CBS 112.46 / NRRL 194 / M139) (Aspergillus nidulans).